The following is a 327-amino-acid chain: Ribose-phosphate pyrophosphokinase (327 aa).

ATP contacts are provided by residues 40-42 and 99-100; these read DGE and RQ. Residues His-134 and Asp-173 each coordinate Mg(2+). The active site involves Lys-196. Residues Arg-198, Asp-222, and 226-230 contribute to the D-ribose 5-phosphate site; that span reads DTANT.

It belongs to the ribose-phosphate pyrophosphokinase family. Class I subfamily. As to quaternary structure, homohexamer. Mg(2+) serves as cofactor.

The protein resides in the cytoplasm. It catalyses the reaction D-ribose 5-phosphate + ATP = 5-phospho-alpha-D-ribose 1-diphosphate + AMP + H(+). Its pathway is metabolic intermediate biosynthesis; 5-phospho-alpha-D-ribose 1-diphosphate biosynthesis; 5-phospho-alpha-D-ribose 1-diphosphate from D-ribose 5-phosphate (route I): step 1/1. Its function is as follows. Involved in the biosynthesis of the central metabolite phospho-alpha-D-ribosyl-1-pyrophosphate (PRPP) via the transfer of pyrophosphoryl group from ATP to 1-hydroxyl of ribose-5-phosphate (Rib-5-P). This chain is Ribose-phosphate pyrophosphokinase, found in Neisseria meningitidis serogroup A / serotype 4A (strain DSM 15465 / Z2491).